A 207-amino-acid chain; its full sequence is Outer-membrane lipoprotein LolB (207 aa).

The signal sequence occupies residues 1–21 (MPMRKRHFYRLLPLASLLLAA). Cys-22 carries the N-palmitoyl cysteine lipid modification. Cys-22 carries the S-diacylglycerol cysteine lipid modification.

It belongs to the LolB family. As to quaternary structure, monomer.

Its subcellular location is the cell outer membrane. Its function is as follows. Plays a critical role in the incorporation of lipoproteins in the outer membrane after they are released by the LolA protein. The chain is Outer-membrane lipoprotein LolB from Yersinia pestis bv. Antiqua (strain Antiqua).